Reading from the N-terminus, the 732-residue chain is Catalase-peroxidase (732 aa).

Basic and acidic residues predominate over residues 1-10 (MDAKTDDKAG). A disordered region spans residues 1–26 (MDAKTDDKAGKCPVAHGPAPRGNRDW). The tryptophyl-tyrosyl-methioninium (Trp-Tyr) (with M-243) cross-link spans 95-217 (WHSAGTYRTT…LGAVQMGLIY (123 aa)). The active-site Proton acceptor is histidine 96. The tryptophyl-tyrosyl-methioninium (Tyr-Met) (with W-95) cross-link spans 217–243 (YVNPEGPNGNPDPLGSAKDIRETFARM). Position 258 (histidine 258) interacts with heme b.

It belongs to the peroxidase family. Peroxidase/catalase subfamily. As to quaternary structure, homodimer or homotetramer. Requires heme b as cofactor. Formation of the three residue Trp-Tyr-Met cross-link is important for the catalase, but not the peroxidase activity of the enzyme.

It catalyses the reaction H2O2 + AH2 = A + 2 H2O. The catalysed reaction is 2 H2O2 = O2 + 2 H2O. In terms of biological role, bifunctional enzyme with both catalase and broad-spectrum peroxidase activity. The chain is Catalase-peroxidase from Rhodopseudomonas palustris (strain BisB18).